The following is a 325-amino-acid chain: 6-hydroxymellein 5-farnesyltransferase cdmH (325 aa).

The next 5 membrane-spanning stretches (helical) occupy residues 60–80 (ASIL…GAAG), 113–133 (AFTW…AMLG), 138–158 (WPFM…KRPI), 169–189 (LLGI…YGPC), and 192–212 (ISEI…WSFY). An N-linked (GlcNAc...) asparagine glycan is attached at N214. The next 3 membrane-spanning stretches (helical) occupy residues 243 to 263 (ALLA…LRPF), 267 to 287 (WLWL…LLSF), and 295 to 315 (GGVL…ACTL).

It belongs to the UbiA prenyltransferase family. Mg(2+) serves as cofactor.

It is found in the membrane. It catalyses the reaction 6-hydroxymellein + (2E,6E)-farnesyl diphosphate = verruculide C + diphosphate. It functions in the pathway secondary metabolite biosynthesis; terpenoid biosynthesis. 6-hydroxymellein 5-farnesyltransferase; part of the gene cluster that mediates the biosynthesis of chrodrimanin B, a meroterpenoid that acts as a potent blocker of insect GABA-gated chloride channels. The first step of the pathway is the biosynthesis of 6-hydroxymellein by the polyketide synthase cdmE. The prenyltransferase cdmH acts as a 6-hydroxymellein 5-farnesyltransferase and produces the hydrophobic metabolite verruculide C. The FAD-dependent monooxygenase cdmI further converts verruculide C into verruculide B. The terpene cyclase cdmG then produced the pentacyclic molecule 3-hydroxypentacecilide A, the backbone structure of chrodrimanin B, via folding the farnesyl moiety of the substrate into the chair-boat conformation. The short-chain dehydrogenase/reductase cdmF functions as the 3-OH dehydrogenase that oxidizes the C-3 hydroxyl group of 3-hydroxypentacecilide A and produces chrodrimanin C, the dehydrogenated product of 3-hydroxypentacecilide A. The cytochrome P450 monooxygenase cdmJ then accepts both 3-hydroxypentacecilide A and chrodrimanin C and functions as a C-7-beta-hydroxylase to produce respectively chrodrimanin H and chrodrimanin F. The dioxygenase cdmA accepts chrodrimanin H to afford chrodrimanin E, which is further transformed to chrodrimanin A by the dioxygenase cdmD. CdmA can also accept chrodrimanin C as substrate to convert it into verruculide A, which is further converted into chrodrimanin T by cdmD. The last step of the biosynthesis is proposed to be performed by the acetyltransferase cdmC which acetylates chrodrimanin A to yield chrodrimanin B. The pathway may also lead to the production of additional shunt products, including chrodrimanins T and U. This Talaromyces verruculosus (Penicillium verruculosum) protein is 6-hydroxymellein 5-farnesyltransferase cdmH.